Reading from the N-terminus, the 236-residue chain is Zinc finger AN1 domain-containing stress-associated protein 13 (236 aa).

2 disordered regions span residues 48–81 (KEGR…PGKR) and 150–173 (TVPE…AKTK). Positions 66–75 (RLQLPTTSIV) are enriched in polar residues. An AN1-type; degenerate zinc finger spans residues 170–216 (AKTKSRCAACGRRVGLMGFECRCGAVFCGAHPLLGQARLWLRLQGRA). Residues cysteine 176, cysteine 179, cysteine 197, and histidine 200 each coordinate Zn(2+).

May be involved in environmental stress response. This chain is Zinc finger AN1 domain-containing stress-associated protein 13 (SAP13), found in Oryza sativa subsp. japonica (Rice).